Consider the following 198-residue polypeptide: Molybdenum cofactor guanylyltransferase (198 aa).

GTP is bound by residues 14-16 (LAG), K27, D73, and D103. Position 103 (D103) interacts with Mg(2+).

Belongs to the MobA family. In terms of assembly, monomer. It depends on Mg(2+) as a cofactor.

It is found in the cytoplasm. The catalysed reaction is Mo-molybdopterin + GTP + H(+) = Mo-molybdopterin guanine dinucleotide + diphosphate. Its function is as follows. Transfers a GMP moiety from GTP to Mo-molybdopterin (Mo-MPT) cofactor (Moco or molybdenum cofactor) to form Mo-molybdopterin guanine dinucleotide (Mo-MGD) cofactor. The sequence is that of Molybdenum cofactor guanylyltransferase from Pseudomonas aeruginosa (strain LESB58).